The following is a 441-amino-acid chain: Xylose isomerase (441 aa).

Residues His-99 and Asp-102 contribute to the active site. Mg(2+) is bound by residues Glu-230, Glu-266, His-269, Asp-294, Asp-305, Asp-307, and Asp-337.

It belongs to the xylose isomerase family. Homotetramer. It depends on Mg(2+) as a cofactor.

The protein resides in the cytoplasm. It carries out the reaction alpha-D-xylose = alpha-D-xylulofuranose. Exhibits xylose isomerase activity. This Bacillus sp. (strain LW2) protein is Xylose isomerase (xylA).